Reading from the N-terminus, the 210-residue chain is Protein GrpE (210 aa).

Basic and acidic residues predominate over residues 1 to 12 (MSDQAKDERAPS). Disordered stretches follow at residues 1–26 (MSDQ…RTEG) and 191–210 (IAAE…EKDA).

It belongs to the GrpE family. As to quaternary structure, homodimer.

It is found in the cytoplasm. Participates actively in the response to hyperosmotic and heat shock by preventing the aggregation of stress-denatured proteins, in association with DnaK and GrpE. It is the nucleotide exchange factor for DnaK and may function as a thermosensor. Unfolded proteins bind initially to DnaJ; upon interaction with the DnaJ-bound protein, DnaK hydrolyzes its bound ATP, resulting in the formation of a stable complex. GrpE releases ADP from DnaK; ATP binding to DnaK triggers the release of the substrate protein, thus completing the reaction cycle. Several rounds of ATP-dependent interactions between DnaJ, DnaK and GrpE are required for fully efficient folding. This chain is Protein GrpE, found in Mesorhizobium japonicum (strain LMG 29417 / CECT 9101 / MAFF 303099) (Mesorhizobium loti (strain MAFF 303099)).